The sequence spans 371 residues: tRNA-specific 2-thiouridylase MnmA (371 aa).

ATP contacts are provided by residues 13–20 (GMSGGVDS) and Met39. The tract at residues 99-101 (NPD) is interaction with target base in tRNA. Cys104 serves as the catalytic Nucleophile. The cysteines at positions 104 and 200 are disulfide-linked. Residue Gly128 participates in ATP binding. Residues 150–152 (KDQ) form an interaction with tRNA region. Catalysis depends on Cys200, which acts as the Cysteine persulfide intermediate. Residues 308–309 (RY) are interaction with tRNA.

The protein belongs to the MnmA/TRMU family.

It is found in the cytoplasm. It carries out the reaction S-sulfanyl-L-cysteinyl-[protein] + uridine(34) in tRNA + AH2 + ATP = 2-thiouridine(34) in tRNA + L-cysteinyl-[protein] + A + AMP + diphosphate + H(+). Functionally, catalyzes the 2-thiolation of uridine at the wobble position (U34) of tRNA, leading to the formation of s(2)U34. The protein is tRNA-specific 2-thiouridylase MnmA of Bacillus cereus (strain ATCC 14579 / DSM 31 / CCUG 7414 / JCM 2152 / NBRC 15305 / NCIMB 9373 / NCTC 2599 / NRRL B-3711).